The primary structure comprises 644 residues: MKLITILFLCSRLLLSLTQESQSEEIDCNDKDLFKAVDAALKKYNSQNQSNNQFVLYRITEATKTVGSDTFYSFKYEIKEGDCPVQSGKTWQDCEYKDAAKAATGECTATVGKRSSTKFSVATQTCQITPAEGPVVTAQYDCLGCVHPISTQSPDLEPILRHGIQYFNNNTQHSSLFMLNEVKRAQRQVVAGLNFRITYSIVQTNCSKENFLFLTPDCKSLWNGDTGECTDNAYIDIQLRIASFSQNCDIYPGKDFVQPPTKICVGCPRDIPTNSPELEETLTHTITKLNAENNATFYFKIDNVKKARVQVVAGKKYFIDFVARETTCSKESNEELTESCETKKLGQSLDCNAEVYVVPWEKKIYPTVNCQPLGMISLMKRPPGFSPFRSSRIGEIKEETTVSPPHTSMAPAQDEERDSGKEQGHTRRHDWGHEKQRKHNLGHGHKHERDQGHGHQRGHGLGHGHEQQHGLGHGHKFKLDDDLEHQGGHVLDHGHKHKHGHGHGKHKNKGKKNGKHNGWKTEHLASSSEDSTTPSAQTQEKTEGPTPIPSLAKPGVTVTFSDFQDSDLIATMMPPISPAPIQSDDDWIPDIQIDPNGLSFNPISDFPDTTSPKCPGRPWKSVSEINPTTQMKESYYFDLTDGLS.

The signal sequence occupies residues 1–18 (MKLITILFLCSRLLLSLT). The residue at position 19 (Gln19) is a Pyrrolidone carboxylic acid; in mature form. Residues 28-132 (CNDKDLFKAV…TQTCQITPAE (105 aa)) enclose the Cystatin kininogen-type 1 domain. 9 disulfide bridges follow: Cys28–Cys614, Cys83–Cys94, Cys107–Cys126, Cys142–Cys145, Cys206–Cys218, Cys229–Cys248, Cys264–Cys267, Cys328–Cys340, and Cys351–Cys370. N-linked (GlcNAc...) (complex) asparagine glycosylation occurs at Asn48. The interval 120–153 (SVATQTCQITPAEGPVVTAQYDCLGCVHPISTQS) is O-glycosylated at one site only. Positions 151–254 (TQSPDLEPIL…SQNCDIYPGK (104 aa)) constitute a Cystatin kininogen-type 2 domain. The N-linked (GlcNAc...) asparagine glycan is linked to Asn169. An N-linked (GlcNAc...) (complex) asparagine glycan is attached at Asn205. The 104-residue stretch at 273–376 (TNSPELEETL…TVNCQPLGMI (104 aa)) folds into the Cystatin kininogen-type 3 domain. N-linked (GlcNAc...) (complex) asparagine glycosylation occurs at Asn294. At Ser332 the chain carries Phosphoserine; by FAM20C. A 4-hydroxyproline; partial modification is found at Pro383. Residues 387–555 (PFRSSRIGEI…TPIPSLAKPG (169 aa)) form a disordered region. Thr401 is a glycosylation site (O-linked (GalNAc...) threonine). The span at 418–434 (DSGKEQGHTRRHDWGHE) shows a compositional bias: basic and acidic residues. Repeats lie at residues 420-449 (GKEQ…KHER), 450-479 (DQGH…KFKL), and 480-510 (DDDL…KNKG). Residues 435–446 (KQRKHNLGHGHK) show a composition bias toward basic residues. The span at 477-493 (FKLDDDLEHQGGHVLDH) shows a compositional bias: basic and acidic residues. Basic residues predominate over residues 494 to 518 (GHKHKHGHGHGKHKNKGKKNGKHNG). A compositionally biased stretch (polar residues) spans 524 to 539 (LASSSEDSTTPSAQTQ). 5 O-linked (GalNAc...) threonine glycosylation sites follow: Thr533, Thr542, Thr546, Thr557, and Thr571. An O-linked (GalNAc...) serine glycan is attached at Ser577. The O-linked (GalNAc...) threonine glycan is linked to Thr628.

Interacts (high molecular weight kininogen) (via amino acids 402-532) with triafestin-1 and triafestin-2, anticoagulant proteins from Triatoma infestans. Interacts (high molecular weight kininogen) (via amino acids 402-532) with short form salivary protein D7R1, an anticoagulant protein from Anopheles stephensi. Interacts (high molecular weight kininogen) (via amino acids 421-466 and 459-513) with haemaphysalin, an anticoagulant protein from Haemaphysalis longicornis. Bradykinin is inactivated by ACE, which removes the dipeptide Arg-Phe from its C-terminus. In terms of processing, bradykinin is released from kininogen by plasma kallikrein. Post-translationally, hydroxylation of Pro-383 occurs prior to the release of bradykinin. Phosphorylated by FAM20C in the extracellular medium. In terms of processing, N- and O-glycosylated. O-glycosylated with core 1 or possibly core 8 glycans. Post-translationally, (Microbial infection) Bradykinin is generated upon proteolytic cleavage by S.pyogenes SpeB to produce hypotension during septic shock. In terms of tissue distribution, secreted in plasma. T-kinin is detected in malignant ovarian, colon and breast carcinomas, but not in benign tumors.

The protein resides in the secreted. It is found in the extracellular space. Its function is as follows. Kininogens are inhibitors of thiol proteases. HMW-kininogen plays an important role in blood coagulation by helping to position optimally prekallikrein and factor XI next to factor XII; HMW-kininogen inhibits the thrombin- and plasmin-induced aggregation of thrombocytes. LMW-kininogen inhibits the aggregation of thrombocytes. LMW-kininogen is in contrast to HMW-kininogen not involved in blood clotting. The active peptide bradykinin is a potent vasodilatator that is released from HMW-kininogen shows a variety of physiological effects: (A) influence in smooth muscle contraction, (B) induction of hypotension, (C) natriuresis and diuresis, (D) decrease in blood glucose level, (E) it is a mediator of inflammation and causes (E1) increase in vascular permeability, (E2) stimulation of nociceptors (4E3) release of other mediators of inflammation (e.g. prostaglandins), (F) it has a cardioprotective effect (directly via bradykinin action, indirectly via endothelium-derived relaxing factor action). The polypeptide is Kininogen-1 (KNG1) (Homo sapiens (Human)).